A 123-amino-acid chain; its full sequence is Glutaredoxin-like protein (123 aa).

The Glutaredoxin domain maps to 27-123 (INEVEESITN…GTLFNDLKKK (97 aa)).

Belongs to the glutaredoxin family.

This chain is Glutaredoxin-like protein (grxB), found in Dictyostelium discoideum (Social amoeba).